Here is a 94-residue protein sequence, read N- to C-terminus: Large ribosomal subunit protein uL29 (94 aa).

The interval 66-94 is disordered; the sequence is NPGERKSRVLSRAKRKKKNLARLSAKVKG. The segment covering 73 to 94 has biased composition (basic residues); sequence RVLSRAKRKKKNLARLSAKVKG.

Belongs to the universal ribosomal protein uL29 family.

This is Large ribosomal subunit protein uL29 from Leptospira borgpetersenii serovar Hardjo-bovis (strain JB197).